The sequence spans 256 residues: Imidazole glycerol phosphate synthase subunit HisF (256 aa).

Active-site residues include Asp-11 and Asp-130.

It belongs to the HisA/HisF family. In terms of assembly, heterodimer of HisH and HisF.

Its subcellular location is the cytoplasm. The catalysed reaction is 5-[(5-phospho-1-deoxy-D-ribulos-1-ylimino)methylamino]-1-(5-phospho-beta-D-ribosyl)imidazole-4-carboxamide + L-glutamine = D-erythro-1-(imidazol-4-yl)glycerol 3-phosphate + 5-amino-1-(5-phospho-beta-D-ribosyl)imidazole-4-carboxamide + L-glutamate + H(+). Its pathway is amino-acid biosynthesis; L-histidine biosynthesis; L-histidine from 5-phospho-alpha-D-ribose 1-diphosphate: step 5/9. Its function is as follows. IGPS catalyzes the conversion of PRFAR and glutamine to IGP, AICAR and glutamate. The HisF subunit catalyzes the cyclization activity that produces IGP and AICAR from PRFAR using the ammonia provided by the HisH subunit. The protein is Imidazole glycerol phosphate synthase subunit HisF of Cupriavidus metallidurans (strain ATCC 43123 / DSM 2839 / NBRC 102507 / CH34) (Ralstonia metallidurans).